A 1524-amino-acid polypeptide reads, in one-letter code: MAMSNGNNDFVVLSNSSIATSAANPSPLTPCDGDHAAQQLTPKEATRTKVSPNGCLQLNGTVKSSFLPLDNQRMPQMLPQCCHPCPYHHPLTSHSSHQECHPEAGPAAPSALASCCMQPHSEYSASLCPNHSPVYQTTCCLQPSPSFCLHHPWPDHFQHQPVQQHIANIRPSRPFKLPKSYAALIADWPVVVLGMCTMFIVVCALVGVLVPELPDFSDPLLGFEPRGTAIGQRLVTWNNMVKNTGYKATLANYPFKYADEQAKSHRDDRWSDDHYEREKREVDWNFHKDSFFCDVPSDRYSRVVFTSSGGETLWNLPAIKSMCNVDNSRIRSHPQFGDLCQRTTAASCCPSWTLGNYIAILNNRSSCQKIVERDVSHTLKLLRTCAKHYQNGTLGPDCWDMAARRKDQLKCTNVPRKCTKYNAVYQILHYLVDKDFMTPKTADYATPALKYSMLFSPTEKGESMMNIYLDNFENWNSSDGVTTITGIEFGIKHSLFQDYLLMDTVYPAIAIVIVLLVMCVYTKSMFITLMTMFAIISSLIVSYFLYRVVFHFEFFPFMNLTALIILVGIGADDAFVLCDVWNYTKFDKPHAETSETVSITLQHAALSMFVTSFTTAAAFYANYVSNITAIRCFGVYAGTAILVNYVLMVTWLPAVVVLHERYLLNIFTCFKKPQQQIYDNKSCWTVACQKCHKVLFAISEASRIFFEKVLPCIVIKFRYLWLFWFLALTVGGAYIVCINPKMKLPSLELSEFQVFRSSHPFERYDAEYKKLFMFERVHHGEELHMPITVIWGVSPEDNGNPLNPKSKGKLTLDSSFNIASPASQAWILHFCQKLRNQTFFYQTDEQDFTSCFIETFKQWMENQDCDEPALYPCCSHWSFPYKQEIFELCIKRAIMELERSTGYHLDSKTPGPRFDINDTIRAVVLEFQSTYLFTLAYEKMHQFYKEVDSWISSELSSAPEGLSNGWFVSNLEFYDLQDSLSDGTLIAMGLSVAVAFSVMLLTTWNIIISLYAIISIAGTIFVTVGSLVLLGWELNVLESVTISVAVGLSVDFAVHYGVAYRLAPDPDREGKVIFSLSRVGSAMAMAALTTFVAGAMMMPSTVLAYTQLGTFMMLIMCISWAFATFFFQCMCRCLGPQGTCGQIPLPKKLQCSAFSHALSTSPSDKGQSKTHTINAYHLDPRGPKSELEHEFYELEPLASHSCTAPEKTTYEETHICSEFFNSQAKNLGMPVHAAYNSELSKSTESDAGSALLQPPLEQHTVCHFFSLNQRCSCPDAYKHLNYGPHSCQQMGDCLCHQCSPTTSSFVQIQNGVAPLKATHQAVEGFVHPITHIHHCPCLQGRVKPAGMQNSLPRNFFLHPVQHIQAQEKIGKTNVHSLQRSIEEHLPKMAEPSSFVCRSTGSLLKTCCDPENKQRELCKNRDVSNLESSGGTENKAGGKVELSLSQTDASVNSEHFNQNEPKVLFNHLMGEAGCRSCPNNSQSCGRIVRVKCNSVDCQMPNMEANVPAVLTHSELSGESLLIKTL.

Asn-59 carries N-linked (GlcNAc...) asparagine glycosylation. A run of 4 helical transmembrane segments spans residues 190-210, 500-520, 525-545, and 549-569; these read VVVLGMCTMFIVVCALVGVLV, LLMDTVYPAIAIVIVLLVMCV, MFITLMTMFAIISSLIVSYFL, and VFHFEFFPFMNLTALIILVGI. In terms of domain architecture, SSD spans 486-658; sequence GIEFGIKHSL…VTWLPAVVVL (173 aa). A glycan (N-linked (GlcNAc...) asparagine) is linked at Asn-582. 8 helical membrane passes run 604–624, 638–658, 719–739, 988–1008, 1010–1030, 1040–1060, 1079–1099, and 1107–1127; these read AALSMFVTSFTTAAAFYANYV, GTAILVNYVLMVTWLPAVVVL, YLWLFWFLALTVGGAYIVCIN, MGLSVAVAFSVMLLTTWNIII, LYAIISIAGTIFVTVGSLVLL, VTISVAVGLSVDFAVHYGVAY, VGSAMAMAALTTFVAGAMMMP, and QLGTFMMLIMCISWAFATFFF.

This sequence belongs to the dispatched family. Interacts with SHH via the cholesterol anchor of the dually lipid-modified SHH (ShhNp).

Its subcellular location is the membrane. Its function is as follows. Functions in hedgehog (Hh) signaling. Regulates the release and extracellular accumulation of cholesterol-modified hedgehog proteins and is hence required for effective production of the Hh signal. Synergizes with SCUBE2 to cause an increase in SHH secretion. The sequence is that of Protein dispatched homolog 1 (DISP1) from Homo sapiens (Human).